The primary structure comprises 481 residues: Probable squalene synthase (481 aa).

Transmembrane regions (helical) follow at residues 294 to 314 (SVFN…ELVF) and 416 to 436 (FLVL…IGAA).

The protein belongs to the phytoene/squalene synthase family. Mg(2+) is required as a cofactor.

It localises to the endoplasmic reticulum membrane. The catalysed reaction is 2 (2E,6E)-farnesyl diphosphate + NADPH + H(+) = squalene + 2 diphosphate + NADP(+). It carries out the reaction 2 (2E,6E)-farnesyl diphosphate + NADH + H(+) = squalene + 2 diphosphate + NAD(+). The protein operates within terpene metabolism; lanosterol biosynthesis; lanosterol from farnesyl diphosphate: step 1/3. Functionally, catalyzes the condensation of 2 two farnesyl pyrophosphate moieties to form squalene. It is the first committed enzyme of the sterol biosynthesis pathway. Required for the biosynthesis of ergosterol. This is Probable squalene synthase (erg-6) from Neurospora crassa (strain ATCC 24698 / 74-OR23-1A / CBS 708.71 / DSM 1257 / FGSC 987).